The sequence spans 99 residues: Complement inhibitor RaCI7 (99 aa).

A signal peptide spans M1–S24. 3 cysteine pairs are disulfide-bonded: C37–C61, C42–C63, and C57–C78.

This sequence belongs to the RaCI family. In terms of tissue distribution, expressed in salivary glands.

It localises to the secreted. Functionally, complement inhibitor. Prevents complement-mediated C5 activation by binding to C5. Binds C5 at a different binding site than the other tick complement inhibitors OmCI and CirpT1, and the drug eculizumab. This Dermacentor andersoni (Rocky mountain wood tick) protein is Complement inhibitor RaCI7.